We begin with the raw amino-acid sequence, 106 residues long: Toxin-like structure LSTX-D8 (106 aa).

The N-terminal stretch at 1–20 is a signal peptide; sequence MTKVLVVVALLVTLISYSSS. The propeptide occupies 21 to 41; that stretch reads EGIDDLEADELLSLMANEQTR. Intrachain disulfides connect C45–C60, C52–C69, C59–C85, and C71–C83.

The protein belongs to the neurotoxin 19 (CSTX) family. 02 (D7) subfamily. Expressed by the venom gland.

The protein localises to the secreted. In Lycosa singoriensis (Wolf spider), this protein is Toxin-like structure LSTX-D8.